We begin with the raw amino-acid sequence, 476 residues long: Zinc metalloproteinase/disintegrin (476 aa).

A signal peptide spans 1–20; it reads MIQVLLVIICLADFPYQGTS. The propeptide occupies 21-184; that stretch reads IILESGNVND…KSDEPIKASQ (164 aa). The residue at position 185 (Gln-185) is a Pyrrolidone carboxylic acid. The region spanning 191–387 is the Peptidase M12B domain; it reads RYIELVVVAD…RNPQCILNEP (197 aa). Ca(2+) contacts are provided by Glu-194 and Asp-278. 3 cysteine pairs are disulfide-bonded: Cys-302/Cys-382, Cys-342/Cys-366, and Cys-344/Cys-349. His-327 serves as a coordination point for Zn(2+). Glu-328 is an active-site residue. Residues His-331 and His-337 each coordinate Zn(2+). Cys-382 and Asn-385 together coordinate Ca(2+). Positions 388 to 403 are excised as a propeptide; that stretch reads LRTDTVSTPVSGNELL. The 82-residue stretch at 395-476 folds into the Disintegrin domain; sequence TPVSGNELLE…AGCPRNGFYG (82 aa). 6 disulfides stabilise this stretch: Cys-409–Cys-424, Cys-411–Cys-419, Cys-418–Cys-441, Cys-432–Cys-438, Cys-437–Cys-462, and Cys-450–Cys-469. A Cell attachment site motif is present at residues 454-456; the sequence is KGD.

This sequence belongs to the venom metalloproteinase (M12B) family. P-II subfamily. P-IId sub-subfamily. In terms of assembly, homodimer; disulfide-linked (disintegrin). The cofactor is Zn(2+). Expressed by the venom gland.

The protein resides in the secreted. The metalloproteinase is inhibited by EDTA, o-phenanthroline, and cysteine. Glutathione does not inhibit the enzymatic activity. Its function is as follows. Shows weak degradation of alpha-fibrinogen, but has no activity on beta- and gamma-chains. Digests luteinizing hormone-releasing hormone (LH-RH) and oxidized insulin at X-Leu, X-Phe, and X-Val bonds as well as X-His bond. Does not show fibrinogen-clotting activity. Does not show hemorrhagic activity. In terms of biological role, inhibits ADP-induced platelet aggregation. The protein is Zinc metalloproteinase/disintegrin of Gloydius brevicauda (Korean slamosa snake).